A 680-amino-acid polypeptide reads, in one-letter code: DNA-directed RNA polymerase subunit beta' (680 aa).

Zn(2+) is bound by residues Cys69, Cys71, Cys87, and Cys90. Mg(2+) contacts are provided by Asp489, Asp491, and Asp493.

The protein belongs to the RNA polymerase beta' chain family. RpoC1 subfamily. In plastids the minimal PEP RNA polymerase catalytic core is composed of four subunits: alpha, beta, beta', and beta''. When a (nuclear-encoded) sigma factor is associated with the core the holoenzyme is formed, which can initiate transcription. Mg(2+) is required as a cofactor. Requires Zn(2+) as cofactor.

The protein resides in the plastid. Its subcellular location is the chloroplast. The catalysed reaction is RNA(n) + a ribonucleoside 5'-triphosphate = RNA(n+1) + diphosphate. DNA-dependent RNA polymerase catalyzes the transcription of DNA into RNA using the four ribonucleoside triphosphates as substrates. The chain is DNA-directed RNA polymerase subunit beta' from Manihot esculenta (Cassava).